The following is a 167-amino-acid chain: Ribosome maturation factor RimM (167 aa).

Residues 94–165 (EHEYYYSDII…TIKITPMEGL (72 aa)) enclose the PRC barrel domain.

This sequence belongs to the RimM family. Binds ribosomal protein uS19.

It is found in the cytoplasm. In terms of biological role, an accessory protein needed during the final step in the assembly of 30S ribosomal subunit, possibly for assembly of the head region. Essential for efficient processing of 16S rRNA. May be needed both before and after RbfA during the maturation of 16S rRNA. It has affinity for free ribosomal 30S subunits but not for 70S ribosomes. This chain is Ribosome maturation factor RimM, found in Staphylococcus epidermidis (strain ATCC 12228 / FDA PCI 1200).